Consider the following 505-residue polypeptide: MSWHQAVWNEPLIFEYKGKGRIGFKIPEEEELKKEISINIPEKLRRKEIDLPELSELEVIRHFIRLSQMSFGVDNGMVPLGSCTMKYNPKIEEEAELLTQNLHPLQDDSTVQGILEVLYYMQKWLAEITGMDLCSLQVPAGAAGELAGVLMIKKYHETKGRGNRDEMLVADTAHGTNPASASMENFKVIYIKSNSEGLVDVDILKEIVSERTAGFMLTNPNTLGLFEENILDIAKYIHSVDAKLYYDGANLNGILGVVRPGDMGFDIVHLNLHKTFAVPHGGGGPGAGAICAKGEMVNFLPYPLVEKKDGKYSLSYIPKYSIGKIATFYGNVGNVVRAYTYILGLGAEGISMIGKMSTLATNYLISQLKNVRGLELIAPYRPRKHEVVFSAKTLAKETGVTANDVAKALLDRGFYAPTIYFPPNVEEALMIEPTETEPKEVLDSFAIAIKEIINTAYSNPKEILDTPKNTSVKRLDQVIANHPSSVTPTYRVKRLREEGKIGSLK.

Residue K274 is modified to N6-(pyridoxal phosphate)lysine.

It belongs to the GcvP family. C-terminal subunit subfamily. In terms of assembly, the glycine cleavage system is composed of four proteins: P, T, L and H. In this organism, the P 'protein' is a heterodimer of two subunits. Pyridoxal 5'-phosphate is required as a cofactor.

It carries out the reaction N(6)-[(R)-lipoyl]-L-lysyl-[glycine-cleavage complex H protein] + glycine + H(+) = N(6)-[(R)-S(8)-aminomethyldihydrolipoyl]-L-lysyl-[glycine-cleavage complex H protein] + CO2. The glycine cleavage system catalyzes the degradation of glycine. The P protein binds the alpha-amino group of glycine through its pyridoxal phosphate cofactor; CO(2) is released and the remaining methylamine moiety is then transferred to the lipoamide cofactor of the H protein. This is Probable glycine dehydrogenase (decarboxylating) subunit 2 from Sulfurisphaera tokodaii (strain DSM 16993 / JCM 10545 / NBRC 100140 / 7) (Sulfolobus tokodaii).